Consider the following 125-residue polypeptide: Snaclec B6 (125 aa).

3 disulfides stabilise this stretch: Cys-2/Cys-13, Cys-30/Cys-119, and Cys-96/Cys-111. One can recognise a C-type lectin domain in the interval 9-120 (HEGHCYKVFK…CNISQYFVCQ (112 aa)). A glycan (N-linked (GlcNAc...) asparagine) is linked at Asn-95. The N-linked (GlcNAc...) asparagine glycan is linked to Asn-112.

This sequence belongs to the snaclec family. As to quaternary structure, heterodimer; disulfide-linked. Expressed by the venom gland.

It is found in the secreted. Its function is as follows. Interferes with one step of hemostasis (modulation of platelet aggregation, or coagulation cascade, for example). The protein is Snaclec B6 of Macrovipera lebetinus (Levantine viper).